We begin with the raw amino-acid sequence, 988 residues long: Isoleucine--tRNA ligase (988 aa).

The 'HIGH' region signature appears at 60–70 (PYANGALHMGH). L-isoleucyl-5'-AMP is bound at residue Glu570. The 'KMSKS' region motif lies at 611–615 (KMSKS). Lys614 is a binding site for ATP. 4 residues coordinate Zn(2+): Cys957, Cys960, Cys977, and Cys980.

This sequence belongs to the class-I aminoacyl-tRNA synthetase family. IleS type 1 subfamily. In terms of assembly, monomer. Zn(2+) serves as cofactor.

It is found in the cytoplasm. It carries out the reaction tRNA(Ile) + L-isoleucine + ATP = L-isoleucyl-tRNA(Ile) + AMP + diphosphate. Catalyzes the attachment of isoleucine to tRNA(Ile). As IleRS can inadvertently accommodate and process structurally similar amino acids such as valine, to avoid such errors it has two additional distinct tRNA(Ile)-dependent editing activities. One activity is designated as 'pretransfer' editing and involves the hydrolysis of activated Val-AMP. The other activity is designated 'posttransfer' editing and involves deacylation of mischarged Val-tRNA(Ile). This is Isoleucine--tRNA ligase from Synechocystis sp. (strain ATCC 27184 / PCC 6803 / Kazusa).